The primary structure comprises 1679 residues: Lysophospholipase NTE1 (1679 aa).

Low complexity predominate over residues 1–20 (MRSMNCTTNNTNNTGQNTKN). The tract at residues 1–21 (MRSMNCTTNNTNNTGQNTKNS) is disordered. Residues 1-49 (MRSMNCTTNNTNNTGQNTKNSLGSSFNSSNYTSYRFQTCLTDQIISEAQ) lie on the Cytoplasmic side of the membrane. Residues 50 to 70 (TWSLSSLFNFSWVVSYFVMGA) form a helical membrane-spanning segment. At 71–103 (SRMIFRYGWYLATLSLLRIPKWIFFKLHHVQFT) the chain is on the lumenal side. Residues 104-124 (LSFWLILFALAVIVFVTYTIM) form a helical membrane-spanning segment. Residues 125-1679 (KERILSQYKR…EFLLHRRNSI (1555 aa)) are Cytoplasmic-facing. Positions 261–274 (SDKDHGDETDHSDT) are enriched in basic and acidic residues. The disordered stretch occupies residues 261–304 (SDKDHGDETDHSDTDGLDDQDRDEEDEEEDDDIDNYDTKSCSSN). Over residues 275–295 (DGLDDQDRDEEDEEEDDDIDN) the composition is skewed to acidic residues. A phosphoserine mark is found at Ser-300 and Ser-312. Disordered stretches follow at residues 498 to 527 (SSGS…KPSD) and 586 to 672 (DILS…VSPR). Polar residues-rich tracts occupy residues 592 to 606 (PIHN…GINT) and 630 to 652 (FSSL…LDNT). A phosphoserine mark is found at Ser-632, Ser-634, Ser-653, Ser-661, Ser-670, Ser-680, and Ser-739. The tract at residues 775–800 (KEYTISNKRHNKSKSQDKKKPRAYKE) is disordered. Residues 788–800 (KSQDKKKPRAYKE) are compositionally biased toward basic and acidic residues. Position 803 is a phosphothreonine (Thr-803). A nucleoside 3',5'-cyclic phosphate-binding positions include 803–947 (TPNL…LTKL) and 943–1074 (SLTK…VAKK). The interval 855–882 (SSSVVSSMSKPEQVSAQSSHKGENPHHT) is disordered. The segment covering 862-873 (MSKPEQVSAQSS) has biased composition (polar residues). A PNPLA domain is found at 1373–1537 (LVLGGGGARG…VDNLPVTEMR (165 aa)). The GXGXXG motif lies at 1377–1382 (GGGARG). The short motif at 1404–1408 (GTSIG) is the GXSXG element. Residue Ser-1406 is the Nucleophile of the active site. Asp-1524 (proton acceptor) is an active-site residue. The DGA/G motif lies at 1524-1526 (DGG).

The protein belongs to the NTE family.

It localises to the endoplasmic reticulum membrane. It is found in the lipid droplet. The catalysed reaction is a 1-acyl-sn-glycero-3-phosphocholine + H2O = sn-glycerol 3-phosphocholine + a fatty acid + H(+). It carries out the reaction a 1,2-diacyl-sn-glycero-3-phosphocholine + 2 H2O = sn-glycerol 3-phosphocholine + 2 a carboxylate + 2 H(+). Its activity is regulated as follows. Positively regulated by SEC14. Inhibited by organophosphorus esters in the order phenyl saligenin phosphate (PSP) &gt; phenyldipentyl phosphinate (PDPP) = diisopropyl fluorophosphate (DFP) &gt; and paraoxon (PXN). Its function is as follows. Intracellular phospholipase B that catalyzes the double deacylation of phosphatidylcholine (PC) to glycerophosphocholine (GroPCho). Plays an important role in membrane lipid homeostasis. Responsible for the rapid PC turnover in response to inositol, elevated temperatures, or when choline is present in the growth medium. NTE1 activity impacts the repressing transcriptional activity of OPI1, the main regulator of phospholipid synthesis gene transcription. This chain is Lysophospholipase NTE1 (NTE1), found in Saccharomyces cerevisiae (strain ATCC 204508 / S288c) (Baker's yeast).